Reading from the N-terminus, the 78-residue chain is WAP four-disulfide core domain protein 12 (78 aa).

Positions 1–21 (MWPNSILVLTVLLISSTLVTG) are cleaved as a signal peptide. One can recognise a WAP domain in the interval 25-72 (KGAEKGVCPPDNVRCIRGEDPQCHNDNDCKDQKICCYWHCGFKCVQPV). Disulfide bonds link Cys32–Cys60, Cys39–Cys64, Cys47–Cys59, and Cys53–Cys68.

It is found in the secreted. Antibacterial protein. Putative acid-stable proteinase inhibitor. The polypeptide is WAP four-disulfide core domain protein 12 (Rattus norvegicus (Rat)).